The primary structure comprises 183 residues: Bifunctional protein PyrR (183 aa).

Substrate contacts are provided by residues 42–43 (TR), arginine 87, 104–112 (DDVLYTGRT), arginine 137, and valine 161. The PRPP-binding motif lies at 100–112 (VILVDDVLYTGRT).

The protein belongs to the purine/pyrimidine phosphoribosyltransferase family. PyrR subfamily.

It catalyses the reaction UMP + diphosphate = 5-phospho-alpha-D-ribose 1-diphosphate + uracil. Regulates the transcription of the pyrimidine nucleotide (pyr) operon in response to exogenous pyrimidines. Its function is as follows. Also displays a weak uracil phosphoribosyltransferase activity which is not physiologically significant. This is Bifunctional protein PyrR from Deinococcus radiodurans (strain ATCC 13939 / DSM 20539 / JCM 16871 / CCUG 27074 / LMG 4051 / NBRC 15346 / NCIMB 9279 / VKM B-1422 / R1).